A 286-amino-acid chain; its full sequence is 3-hydroxyanthranilate 3,4-dioxygenase (286 aa).

A domain A (catalytic) region spans residues 1-160 (MERRVRVKSW…SEQYRTGKPN (160 aa)). Residue Arg-43 participates in O2 binding. Residues His-47, Glu-53, and His-91 each coordinate Fe cation. A substrate-binding site is contributed by Glu-53. Substrate contacts are provided by Arg-95 and Glu-105. The interval 161 to 177 (PDQLLKELPFPLNTRSI) is linker. Residues 178–286 (MKPMSLKAWL…QDPARKKPWW (109 aa)) are domain B.

Belongs to the 3-HAO family. As to quaternary structure, monomer. The cofactor is Fe(2+).

It localises to the cytoplasm. Its subcellular location is the cytosol. It catalyses the reaction 3-hydroxyanthranilate + O2 = (2Z,4Z)-2-amino-3-carboxymuconate 6-semialdehyde. The protein operates within cofactor biosynthesis; NAD(+) biosynthesis; quinolinate from L-kynurenine: step 3/3. Catalyzes the oxidative ring opening of 3-hydroxyanthranilate to 2-amino-3-carboxymuconate semialdehyde, which spontaneously cyclizes to quinolinate. The polypeptide is 3-hydroxyanthranilate 3,4-dioxygenase (Haao) (Mus musculus (Mouse)).